The following is a 260-amino-acid chain: UPF0246 protein BamMC406_2140 (260 aa).

It belongs to the UPF0246 family.

The polypeptide is UPF0246 protein BamMC406_2140 (Burkholderia ambifaria (strain MC40-6)).